Reading from the N-terminus, the 92-residue chain is Small ribosomal subunit protein uS19 (92 aa).

The protein belongs to the universal ribosomal protein uS19 family.

In terms of biological role, protein S19 forms a complex with S13 that binds strongly to the 16S ribosomal RNA. The chain is Small ribosomal subunit protein uS19 from Aliivibrio fischeri (strain ATCC 700601 / ES114) (Vibrio fischeri).